The sequence spans 436 residues: UDP-N-acetylglucosamine 1-carboxyvinyltransferase (436 aa).

K22 to N23 contacts phosphoenolpyruvate. R96 serves as a coordination point for UDP-N-acetyl-alpha-D-glucosamine. Catalysis depends on C120, which acts as the Proton donor. A 2-(S-cysteinyl)pyruvic acid O-phosphothioketal modification is found at C120. UDP-N-acetyl-alpha-D-glucosamine-binding positions include R125–L129, D309, and I331.

This sequence belongs to the EPSP synthase family. MurA subfamily.

It localises to the cytoplasm. The catalysed reaction is phosphoenolpyruvate + UDP-N-acetyl-alpha-D-glucosamine = UDP-N-acetyl-3-O-(1-carboxyvinyl)-alpha-D-glucosamine + phosphate. It functions in the pathway cell wall biogenesis; peptidoglycan biosynthesis. Functionally, cell wall formation. Adds enolpyruvyl to UDP-N-acetylglucosamine. In Acidobacterium capsulatum (strain ATCC 51196 / DSM 11244 / BCRC 80197 / JCM 7670 / NBRC 15755 / NCIMB 13165 / 161), this protein is UDP-N-acetylglucosamine 1-carboxyvinyltransferase.